The primary structure comprises 370 residues: Cyclic AMP-responsive element-binding protein 3-like protein 4 (370 aa).

The tract at residues 1 to 55 (MELGCPELLEPPEDIFSTGSFLELGFNGPASKVPVTRGLQKSEPDDFLNLFIDPN) is required for transcriptional activation. Topologically, residues 1–271 (MELGCPELLE…QTSSRAAQTS (271 aa)) are cytoplasmic. The segment at 61–85 (ETSPGRDSGVSEDPGSPAQQASSSP) is disordered. The segment covering 76-85 (SPAQQASSSP) has biased composition (low complexity). The bZIP domain occupies 193-256 (ILKKIRRKIR…IFLMEQVRQL (64 aa)). Residues 195–234 (KKIRRKIRNKQSAQDSRRRKKEYLDGLESRVAACSEQNQK) form a basic motif region. Residues 235–256 (LQRKVQELERQNIFLMEQVRQL) form a leucine-zipper region. Residues 272–292 (TCVLILLFSLALIILPSFSPF) traverse the membrane as a helical; Signal-anchor for type II membrane protein segment. At 293–370 (QGQSEARPED…IRGMVHTDEM (78 aa)) the chain is on the lumenal side. 2 N-linked (GlcNAc...) asparagine glycosylation sites follow: Asn-318 and Asn-342.

It belongs to the bZIP family. ATF subfamily. As to quaternary structure, binds DNA as a dimer. Forms a heterodimer with CREM isoform Tau. Post-translationally, controlled by regulated intramembrane proteolysis (RIP). Following ER stress a fragment containing the cytoplasmic transcription factor domain is released by proteolysis. The cleavage seems to be performed sequentially by site-1 and site-2 proteases (PS1 and PS2). PS1 cleavage may be suppressed by a determinant in the C-terminal region. As to expression, predominantly expressed at high levels in testis with isoform 2 being the predominant isoform. Specifically expressed in postmeiotic spermatids and accumulates in the mid/late stage (at protein level). Ubiquitously expressed at low levels.

The protein resides in the endoplasmic reticulum membrane. It is found in the cytoplasmic vesicle. The protein localises to the secretory vesicle. Its subcellular location is the acrosome inner membrane. It localises to the nucleus. Functionally, transcriptional activator that may play a role in the unfolded protein response of the testis. Proposed to be involved in spermiogenesis. May be involved in regulating the maturation of sperm head nuclei. Alternatively proposed to be a paternally delivered transcription factor that may function in early zygotic gene activation. Increases the binding of CREM isoform Tau with CRE. The CREM isoform Tau-CREB3L4 heterodimer functions through CRE but not through UPRE and may recruit HIRA to CRE to regulate histone exchange. The protein is Cyclic AMP-responsive element-binding protein 3-like protein 4 (Creb3l4) of Mus musculus (Mouse).